A 233-amino-acid chain; its full sequence is Protein-methionine-sulfoxide reductase heme-binding subunit MsrQ (233 aa).

The next 6 membrane-spanning stretches (helical) occupy residues 13–33 (IKAA…HGLW), 44–64 (ALTR…LCVS), 81–101 (MLGL…LWLD), 117–137 (PFIT…LTSS), 151–171 (SLHR…LWLV), and 174–194 (VALL…GWRV). The region spanning 50 to 164 (GIWTLNFLFL…AVYAVAILGV (115 aa)) is the Ferric oxidoreductase domain.

This sequence belongs to the MsrQ family. As to quaternary structure, heterodimer of a catalytic subunit (MsrP) and a heme-binding subunit (MsrQ).

The protein localises to the cell inner membrane. In terms of biological role, part of the MsrPQ system that repairs oxidized periplasmic proteins containing methionine sulfoxide residues (Met-O), using respiratory chain electrons. Thus protects these proteins from oxidative-stress damage caused by reactive species of oxygen and chlorine generated by the host defense mechanisms. MsrPQ is essential for the maintenance of envelope integrity under bleach stress, rescuing a wide series of structurally unrelated periplasmic proteins from methionine oxidation. MsrQ provides electrons for reduction to the reductase catalytic subunit MsrP, using the quinone pool of the respiratory chain. Probably involved in protection against reactive chlorine species (RCS) generated by chlorite and hypochlorite. In Azospira oryzae (strain ATCC BAA-33 / DSM 13638 / PS) (Dechlorosoma suillum), this protein is Protein-methionine-sulfoxide reductase heme-binding subunit MsrQ.